The chain runs to 1263 residues: Condensin complex subunit dpy-26 (1263 aa).

Positions 1–10 are enriched in polar residues; sequence MDVPSSSNVT. The segment at 1 to 29 is disordered; sequence MDVPSSSNVTGRRKRQVLDDDEDDGFRST. Residues 691–725 adopt a coiled-coil conformation; sequence NEQMDETEVEERNEQDVQRELEDIALAADEVAELM. 2 disordered regions span residues 1098-1118 and 1225-1263; these read YQAA…GTAN and FSNL…EMEE. Residues 1106–1118 are compositionally biased toward polar residues; the sequence is NNQPTTSTYGTAN. The segment covering 1230-1241 has biased composition (basic residues); sequence RRPKAVPVRKGR.

Component of the condensin I complex, which contains the mix-1/SMC2 and smc-4/SMC4 heterodimer, and three non SMC subunits that probably regulate the complex: dpy-26, capg-1 and dpy-28. Within the complex, interacts with dpy-28, mix-1, smc-4 and capg-1. Component of the dosage compensation complex, which consists of the condensin I-like components mix-1/SMC2 and dpy-27/SMC4, and the three non SMC subunits dpy-26, capg-1 and dpy-28. Within the complex, interacts with dpy-27, dpy-28, mix-1 and capg-1. The interaction with dpy-27 is required for dpy-27 protein stability. Interacts with smcl-1. Expressed in embryos and in somatic and germline tissues in L4 stage larvae (at protein level).

It localises to the nucleus. The protein resides in the chromosome. Functionally, required for both chromosome condensation and segregation and for X-chromosome dosage compensation depending on its binding partners. Member of the condensin I complex, a complex required for conversion of interphase chromatin into mitotic-like condense chromosomes and for proper chromosome segregation in mitosis and meiosis. As a member of the condensin I complex, further controls the crossover number and distribution in meiosis by restricting double strand break formation, probably by influencing higher-order chromosome structure. Plays a role in robust cytokinesis upon presence of chromatin obstructions. Also a member of the condensin I-like dosage compensation complex that associates specifically with hermaphrodite X chromosomes to reduce their gene transcription during interphase, possibly through chromatin reorganization. As a member of the dosage compensation complex, also binds to regulatory regions of the autosomal her-1 gene, required for male development, possibly contributing to its repression in hermaphrodites. The protein is Condensin complex subunit dpy-26 of Caenorhabditis elegans.